A 164-amino-acid chain; its full sequence is Probable metalloprotease y4qB (164 aa).

Residues 5 to 142 (IWIPESVVEA…WLPHAWIGQL (138 aa)) enclose the MPN domain. His-89, His-91, and Asp-103 together coordinate Zn(2+).

It belongs to the peptidase M67B family.

The protein is Probable metalloprotease y4qB of Sinorhizobium fredii (strain NBRC 101917 / NGR234).